Reading from the N-terminus, the 334-residue chain is Ethanol acetyltransferase 1 (334 aa).

The transit peptide at 1-16 directs the protein to the mitochondrion; sequence MFASNVVVLNKRSIRF. Catalysis depends on charge relay system residues S124, D148, and H296.

It belongs to the AB hydrolase superfamily.

Its subcellular location is the mitochondrion. The catalysed reaction is ethanol + acetyl-CoA = ethyl acetate + CoA. It carries out the reaction acetyl-CoA + H2O = acetate + CoA + H(+). It catalyses the reaction ethyl acetate + H2O = ethanol + acetate + H(+). Its function is as follows. Alcohol acetyltransferase that catalyzes the synthesis of ethyl acetate from ethanol and acetyl-CoA. Can also function as a thioesterase by hydrolyzing acetyl-CoA in the absence of ethanol, as well as esterase hydrolyzing ethyl acetate. The chain is Ethanol acetyltransferase 1 (EAT1) from Hanseniaspora uvarum (Yeast).